The sequence spans 231 residues: Sugar fermentation stimulation protein homolog (231 aa).

It belongs to the SfsA family.

The polypeptide is Sugar fermentation stimulation protein homolog (Citrifermentans bemidjiense (strain ATCC BAA-1014 / DSM 16622 / JCM 12645 / Bem) (Geobacter bemidjiensis)).